The primary structure comprises 205 residues: Holliday junction branch migration complex subunit RuvA (205 aa).

A domain I region spans residues 1–64 (MIGKLKGVID…EDMIRLYGFA (64 aa)). The tract at residues 65–143 (TQLEREWFRL…AFAGEASGTI (79 aa)) is domain II. The flexible linker stretch occupies residues 144 to 152 (GLKQELGAG). The interval 153–205 (AAPAPVADAVSALSNLGYSRDQAANAVAAALKETGEGADSAKLIRLGLKELSQ) is domain III.

Belongs to the RuvA family. As to quaternary structure, homotetramer. Forms an RuvA(8)-RuvB(12)-Holliday junction (HJ) complex. HJ DNA is sandwiched between 2 RuvA tetramers; dsDNA enters through RuvA and exits via RuvB. An RuvB hexamer assembles on each DNA strand where it exits the tetramer. Each RuvB hexamer is contacted by two RuvA subunits (via domain III) on 2 adjacent RuvB subunits; this complex drives branch migration. In the full resolvosome a probable DNA-RuvA(4)-RuvB(12)-RuvC(2) complex forms which resolves the HJ.

It is found in the cytoplasm. In terms of biological role, the RuvA-RuvB-RuvC complex processes Holliday junction (HJ) DNA during genetic recombination and DNA repair, while the RuvA-RuvB complex plays an important role in the rescue of blocked DNA replication forks via replication fork reversal (RFR). RuvA specifically binds to HJ cruciform DNA, conferring on it an open structure. The RuvB hexamer acts as an ATP-dependent pump, pulling dsDNA into and through the RuvAB complex. HJ branch migration allows RuvC to scan DNA until it finds its consensus sequence, where it cleaves and resolves the cruciform DNA. This Brucella abortus (strain S19) protein is Holliday junction branch migration complex subunit RuvA.